The primary structure comprises 264 residues: Zearalenone hydrolase (264 aa).

The AB hydrolase-1 domain occupies 27–207 (VLVPDGLGEC…KDLEALRGKP (181 aa)). Residues G32, S102, and S103 each contribute to the zearalenone site. S102 is an active-site residue. The active site involves E126. Positions 183, 187, 220, and 242 each coordinate zearalenone. H242 is a catalytic residue.

This sequence belongs to the AB hydrolase superfamily. Hydrolase RutD family. In terms of assembly, homodimer.

The enzyme catalyses zearalenone + H2O = hydrolyzed zearalenone + H(+). Lactonohydrolase that specifically hydrolyzes and deactivates the mycotoxin zearalenone (ZEN) and its zearalenol (ZOL) derivatives. ZHD101 prefers ZEN to ZOL as its substrate, but ZOL, especially the alpha-form, shows higher estrogenic toxicity than ZEN. The protein is Zearalenone hydrolase of Bionectria ochroleuca (Gliocladium roseum).